The chain runs to 307 residues: D-alanine--D-alanine ligase (307 aa).

An ATP-grasp domain is found at Lys105–Glu304. Val135 to Thr190 contacts ATP. Residues Asp258, Glu271, and Asn273 each contribute to the Mg(2+) site.

The protein belongs to the D-alanine--D-alanine ligase family. The cofactor is Mg(2+). It depends on Mn(2+) as a cofactor.

It is found in the cytoplasm. The catalysed reaction is 2 D-alanine + ATP = D-alanyl-D-alanine + ADP + phosphate + H(+). The protein operates within cell wall biogenesis; peptidoglycan biosynthesis. Its function is as follows. Cell wall formation. The protein is D-alanine--D-alanine ligase of Actinobacillus succinogenes (strain ATCC 55618 / DSM 22257 / CCUG 43843 / 130Z).